The sequence spans 224 residues: UPF0441 protein ECA0329 (224 aa).

The segment at 180–224 is disordered; that stretch reads TALAPKPATTSTITRGGFGETVAKQNSMQRSSASSNSSSSRSMGG. Residues 204–224 are compositionally biased toward low complexity; it reads QNSMQRSSASSNSSSSRSMGG.

Belongs to the UPF0441 family.

This Pectobacterium atrosepticum (strain SCRI 1043 / ATCC BAA-672) (Erwinia carotovora subsp. atroseptica) protein is UPF0441 protein ECA0329.